The sequence spans 464 residues: Alpha-amylase (464 aa).

Positions 1–21 (MKNTAGILAIAGMLIAPLAHA) are cleaved as a signal peptide. Substrate contacts are provided by His-107 and Arg-213. Asp-215 serves as the catalytic Nucleophile. 218 to 219 (KH) contacts substrate. Glu-242 serves as the catalytic Proton donor. The substrate site is built by Gly-247 and His-313.

This sequence belongs to the glycosyl hydrolase 13 family.

It is found in the secreted. The catalysed reaction is Endohydrolysis of (1-&gt;4)-alpha-D-glucosidic linkages in polysaccharides containing three or more (1-&gt;4)-alpha-linked D-glucose units.. In Aeromonas hydrophila, this protein is Alpha-amylase.